The chain runs to 474 residues: PRAME family member 8 (474 aa).

The LRR 1; degenerate repeat unit spans residues 97–122; that stretch reads QSKLQVLDLRNVDENFCDIFSGATAS. The LRR 2; degenerate repeat unit spans residues 177–201; that stretch reads HVCCKELQVFGMPIHSIIEVLNMVE. Residues 202 to 228 form an LRR 3; degenerate repeat; the sequence is LDCIQEVEVCCPWELSTLVKFAPYLGQ. The LRR 4; degenerate repeat unit spans residues 229–264; that stretch reads MRNLRKLVLFNIRASACIPPDNKGQFIARFTSQFLK. LRR repeat units follow at residues 265–290, 291–322, 323–341, 347–374, and 375–399; these read LDYF…LRCL, QASL…RQLK, ELDL…PLTG, VATL…VLSR, and CSQL…LLRH.

It belongs to the PRAME family.

The protein is PRAME family member 8 of Homo sapiens (Human).